The sequence spans 61 residues: Metallothionein-2 (61 aa).

An N-acetylmethionine modification is found at Met1. Positions 1–29 are beta; it reads MDPNCSCATDGSCSCAGSCKCKQCKCTSC. Residues Cys5, Cys7, Cys13, Cys15, Cys19, Cys21, Cys24, Cys26, Cys29, Cys33, Cys34, Cys36, Cys37, Cys41, Cys44, Cys48, Cys50, and Cys57 each coordinate a divalent metal cation. The alpha stretch occupies residues 30 to 61; it reads KKSCCSCCPVGCAKCSQGCICKEASDKCSCCA. A Phosphoserine modification is found at Ser58. A divalent metal cation is bound by residues Cys59 and Cys60.

Belongs to the metallothionein superfamily. Type 1 family.

Metallothioneins have a high content of cysteine residues that bind various heavy metals; these proteins are transcriptionally regulated by both heavy metals and glucocorticoids. The polypeptide is Metallothionein-2 (Mt2) (Rattus norvegicus (Rat)).